Reading from the N-terminus, the 459-residue chain is MFMFNFDNGHDPNRPSFFEMLNQHQMMPSFKPALKYIFTVLSQRNPKFRYIVNYYDECFYSLLLLLEYHYLKYYEGSFSENFYNLKRIKPRNNNANGDGDTLFSLLKRLVVTPSNAGQGPETYTKSQILKKSFAMIRRNRAAASSSQQAKDDLNTMIQDSDRKESLIYLVLIPYFKGKLDEYYKKESDPLAELGLVSSDNNNNNNDNINDQIQQLEEQIQQQQTIVNGNNNSNNNNKKLKIKFLILIRFLKGSKTLKKLKTIFLKVYPFISAIYEALFFIYQLLYLYEYTNYYTPFFHFQNIQLKRLNHKDIESHRVVISNRRRDRINFVRDWPGSSFFVRLVSILDSILDYSKYILPLSVFIFKSLEWWYSENRISAPTLPIPTPPTPSKRAPGGLEIPRDKRLCPLCLKERTNPTICGSGFVFCYPCIFGYVNEHSKCPITFLPTNTEQLRKIYETV.

Topologically, residues 1 to 16 are peroxisomal matrix; that stretch reads MFMFNFDNGHDPNRPS. The helical transmembrane segment at 17–44 threads the bilayer; sequence FFEMLNQHQMMPSFKPALKYIFTVLSQR. The Cytoplasmic portion of the chain corresponds to 45 to 47; that stretch reads NPK. A helical transmembrane segment spans residues 48–72; that stretch reads FRYIVNYYDECFYSLLLLLEYHYLK. Residues 73–158 lie on the Peroxisomal matrix side of the membrane; that stretch reads YYEGSFSENF…AKDDLNTMIQ (86 aa). A helical transmembrane segment spans residues 159–196; it reads DSDRKESLIYLVLIPYFKGKLDEYYKKESDPLAELGLV. Topologically, residues 197–248 are cytoplasmic; sequence SSDNNNNNNDNINDQIQQLEEQIQQQQTIVNGNNNSNNNNKKLKIKFLILIR. Residues 249 to 287 traverse the membrane as a helical segment; sequence FLKGSKTLKKLKTIFLKVYPFISAIYEALFFIYQLLYLY. The Peroxisomal matrix portion of the chain corresponds to 288–355; that stretch reads EYTNYYTPFF…LDSILDYSKY (68 aa). The chain crosses the membrane as a helical span at residues 356–380; it reads ILPLSVFIFKSLEWWYSENRISAPT. The Cytoplasmic segment spans residues 381–459; the sequence is LPIPTPPTPS…EQLRKIYETV (79 aa). Zn(2+) is bound by residues C406, C409, C426, and C429. The RING-type; degenerate zinc-finger motif lies at 406–444; it reads CPLCLKERTNPTICGSGFVFCYPCIFGYVNEHSKCPITF.

Belongs to the pex2/pex10/pex12 family. As to quaternary structure, component of the PEX2-PEX10-PEX12 retrotranslocation channel.

The protein resides in the peroxisome membrane. It functions in the pathway protein modification; protein ubiquitination. Its function is as follows. Component of a retrotranslocation channel required for peroxisome organization by mediating export of the PEX5 receptor from peroxisomes to the cytosol, thereby promoting PEX5 recycling. The retrotranslocation channel is composed of PEX2, PEX10 and PEX12; each subunit contributing transmembrane segments that coassemble into an open channel that specifically allows the passage of PEX5 through the peroxisomal membrane. PEX12 also regulates PEX5 recycling by activating the E3 ubiquitin-protein ligase activity of PEX10. When PEX5 recycling is compromised, PEX12 stimulates PEX10-mediated polyubiquitination of PEX5, leading to its subsequent degradation. The chain is Putative peroxisome assembly protein 12 (pex12) from Dictyostelium discoideum (Social amoeba).